Here is a 247-residue protein sequence, read N- to C-terminus: 5-oxoprolinase subunit A (247 aa).

This sequence belongs to the LamB/PxpA family. As to quaternary structure, forms a complex composed of PxpA, PxpB and PxpC.

It carries out the reaction 5-oxo-L-proline + ATP + 2 H2O = L-glutamate + ADP + phosphate + H(+). In terms of biological role, catalyzes the cleavage of 5-oxoproline to form L-glutamate coupled to the hydrolysis of ATP to ADP and inorganic phosphate. The protein is 5-oxoprolinase subunit A of Vibrio vulnificus (strain YJ016).